A 130-amino-acid polypeptide reads, in one-letter code: Small ribosomal subunit protein uS9 (130 aa).

The protein belongs to the universal ribosomal protein uS9 family.

This chain is Small ribosomal subunit protein uS9, found in Aeromonas hydrophila subsp. hydrophila (strain ATCC 7966 / DSM 30187 / BCRC 13018 / CCUG 14551 / JCM 1027 / KCTC 2358 / NCIMB 9240 / NCTC 8049).